The following is a 612-amino-acid chain: Proton channel OTOP1 (612 aa).

Over residues 1 to 46 (MLEGLGSPASPRAAASASVAGSSGPAACSPPSSSAPRSPESPAPRR) the composition is skewed to low complexity. Residues 1-50 (MLEGLGSPASPRAAASASVAGSSGPAACSPPSSSAPRSPESPAPRRGGVR) are disordered. Over 1-58 (MLEGLGSPASPRAAASASVAGSSGPAACSPPSSSAPRSPESPAPRRGGVRASVPQKLA) the chain is Cytoplasmic. A helical transmembrane segment spans residues 59-80 (EMLSSQYGLIVFVAGLLLLLAW). The Extracellular portion of the chain corresponds to 81-88 (AVHAAGVS). Residues 89–112 (KSDLLCFLTALMLLQLLWMLWYVG) traverse the membrane as a helical segment. Over 113-130 (RSSAHRRLFRLKDTHAGA) the chain is Cytoplasmic. Residues 131–153 (GWLRGSITLFAVITVILGCLKIG) form a helical membrane-spanning segment. Residues 154 to 163 (YFIGFSECLS) lie on the Extracellular side of the membrane. The helical transmembrane segment at 164–188 (ATEGVFPVTHSVHTLLQVYFLWGHA) threads the bilayer. At 189–196 (KDIIQSFK) the chain is on the cytoplasmic side. Residues 197-223 (TLERFGVIHSVFTNLLLWANGVLNESK) traverse the membrane as a helical segment. Residues 224 to 264 (HQLNEHKERLITLGFGNITTVLDDHTPQCNCTPPTLCTAIS) are Extracellular-facing. The chain crosses the membrane as a helical span at residues 265–290 (HGIYYLYPFNIEYQILASTMLYVLWK). The Cytoplasmic segment spans residues 291 to 311 (NIGRKVDSHQHQKMQFKSDGV). The helical transmembrane segment at 312–334 (MVGAVLGLTVLAATIAVVVVYLI) threads the bilayer. Residues 335–344 (HIGRSKTKSE) lie on the Extracellular side of the membrane. Residues 345-370 (SALIMFYLYAITLLMLMGAAGLAGIR) form a helical membrane-spanning segment. Residues 371–388 (IYRIDEKSLDESKNPARK) are Cytoplasmic-facing. The helical transmembrane segment at 389–413 (LDSDLLVGTASGSWLISWGSILAIL) threads the bilayer. Over 414–423 (CAEGHPRYTW) the chain is Extracellular. A helical membrane pass occupies residues 424–444 (YNLPYSILAIVEKYIQNLFIF). The Cytoplasmic portion of the chain corresponds to 445–544 (ESIHREPEKL…QGNAKRKVLR (100 aa)). Residues 499–525 (ANGNVCMRESHDKEEEKQEESSWGGSP) form a disordered region. The span at 506–518 (RESHDKEEEKQEE) shows a compositional bias: basic and acidic residues. A helical membrane pass occupies residues 545 to 563 (NIAAFLFLCNISLWIPPAF). The Extracellular segment spans residues 564-581 (GCRPEYDNGLEEIVFGFE). The helical transmembrane segment at 582 to 605 (PWIIVVNLAMPFSIFYRMHAAASL) threads the bilayer. At 606-612 (FEVYCKI) the chain is on the cytoplasmic side.

This sequence belongs to the otopetrin family. Homodimer. Interacts with STAT1, independently of STAT1 phosphorylation status.

Its subcellular location is the cell membrane. It is found in the cell projection. It localises to the microvillus. It catalyses the reaction H(+)(in) = H(+)(out). With respect to regulation, activated by both acid and alkali, with proton influx in response to extracellular acid and proton efflux during alkali stimulation. Inhibited by Zn(2+); this inhibition is thought to be pH-sensitive. Currents evoked in response to mild acid (pH 6.0) stimulus may also be mildly potentiated by exposure to Zn(2+). Activated by NH(4)Cl. Its function is as follows. Proton-selective ion channel. Biphasically modulated by acid and alkali, mediating proton influx and efflux in response to extracellular acid and base stimulation, respectively. Sour taste receptor, which carries inward currents in response to extracellular acidification. Sensor for ammonium chloride (NH(4)Cl) in taste receptor cells. NH(4)Cl acts by increasing the intracellular pH, thereby generating a driving force for proton entry through OTOP1 channel. Might also participate in alkaline sensation. Plays a role in the regulation of Ca(2+) flux in response to purigenic (ATP, ADP and UDP) stimuli, leading to increase in cytosolic Ca(2+) due to influx of extracellular calcium. May play this role by inhibiting P2Y purinoceptor-mediated Ca(2+) release in a Ca(2+)-dependent manner and promote an influx of Ca(2+) in response to ATP. Through this mechanism and possibly others, plays a role in the formation and function of calcium carbonate-based structures in the vestibular system of the inner ear, called otoconia, that sense gravity and linear acceleration. In obesity, may attenuate adipose tissue inflammation, through the negative regulation of IFNG signaling, hence may play an adaptive role in the maintainance of metabolic homeostasis. Following alkali activation, may also be permeable Na(+), K(+), Cs(+) and Li(+). The chain is Proton channel OTOP1 from Homo sapiens (Human).